Consider the following 115-residue polypeptide: uncharacterized protein (115 aa).

The segment covering 90-100 (THFGRPATRRR) has biased composition (basic residues). The interval 90-115 (THFGRPATRRRPLGEREVNPSARSLG) is disordered.

This is an uncharacterized protein from Saccharomyces cerevisiae (strain ATCC 204508 / S288c) (Baker's yeast).